The primary structure comprises 242 residues: Platinum sensitivity protein 3 (242 aa).

In terms of assembly, component of the SHU complex composed of at least CSM2, PSY3, SHU1 and SHU2.

The protein resides in the nucleus. Required for resistance to the DNA-damaging agents methyl methanesulfonate (MMS), cisplatin and oxaliplatin, but not to mitomycin C. Plays a role in protection against mutation accumulation. May be a component of the recombination-repair pathway. The chain is Platinum sensitivity protein 3 (PSY3) from Saccharomyces cerevisiae (strain ATCC 204508 / S288c) (Baker's yeast).